Reading from the N-terminus, the 236-residue chain is Orotidine 5'-phosphate decarboxylase (236 aa).

Substrate is bound by residues Asp-12, Lys-34, 60-69, Thr-123, Arg-184, Gln-193, Gly-213, and Arg-214; that span reads DLKLHDIPHT. The active-site Proton donor is Lys-62.

The protein belongs to the OMP decarboxylase family. Type 1 subfamily. In terms of assembly, homodimer.

The catalysed reaction is orotidine 5'-phosphate + H(+) = UMP + CO2. It participates in pyrimidine metabolism; UMP biosynthesis via de novo pathway; UMP from orotate: step 2/2. Functionally, catalyzes the decarboxylation of orotidine 5'-monophosphate (OMP) to uridine 5'-monophosphate (UMP). The chain is Orotidine 5'-phosphate decarboxylase from Gluconobacter oxydans (strain 621H) (Gluconobacter suboxydans).